The following is a 492-amino-acid chain: Solute carrier family 2, facilitated glucose transporter member 1 (492 aa).

Met-1 is modified (N-acetylmethionine). Residues 1–11 are Cytoplasmic-facing; the sequence is MEPSSKKLTGR. The chain crosses the membrane as a helical span at residues 12–33; that stretch reads LMLAVGGAVLGSLQFGYNTGVI. Residues 34-66 lie on the Extracellular side of the membrane; sequence NAPQKVIEEFYNQTWLHRYGESISPATLTTLWS. Asn-45 carries an N-linked (GlcNAc...) asparagine glycan. A helical membrane pass occupies residues 67–87; that stretch reads LSVAIFSVGGMIGSFSVGLFV. At 88–90 the chain is on the cytoplasmic side; that stretch reads NRF. A helical transmembrane segment spans residues 91-112; sequence GRRNSMLMMNLLAFISAVLMGF. Residues 113 to 120 lie on the Extracellular side of the membrane; that stretch reads SKLGKSFE. Residues 121-144 form a helical membrane-spanning segment; it reads MLILGRFIIGVYCGLTTGFVPMYV. The Cytoplasmic segment spans residues 145–155; the sequence is GEVSPTALRGA. A helical transmembrane segment spans residues 156–176; it reads LGTLHQLGIVVGILIAQVFGL. Gln-161 lines the D-glucose pocket. Topologically, residues 177–185 are extracellular; it reads DSIMGNEEL. A helical transmembrane segment spans residues 186-206; it reads WPLLLSVIFIPALLQCVLLPF. The Cytoplasmic portion of the chain corresponds to 207-271; that stretch reads CPESPRFLLI…LFRSAAYRQP (65 aa). Ser-226 bears the Phosphoserine mark. Residues 272–293 form a helical membrane-spanning segment; that stretch reads ILIAVVLQLSQQLSGINAVFYY. Residues 282–283 and Asn-288 contribute to the D-glucose site; that span reads QQ. Residues 294 to 306 are Extracellular-facing; the sequence is STSIFEKAGVQQP. Residues 307 to 328 form a helical membrane-spanning segment; the sequence is VYATIGSGIVNTAFTVVSLFVV. Asn-317 is a binding site for D-glucose. Over 329–334 the chain is Cytoplasmic; the sequence is ERAGRR. The chain crosses the membrane as a helical span at residues 335–355; that stretch reads TLHLIGLAGMAGCAVLMTIAL. The Extracellular portion of the chain corresponds to 356–365; sequence ALLEQLPWMS. The chain crosses the membrane as a helical span at residues 366–388; the sequence is YLSIVAIFGFVAFFEVGPGPIPW. D-glucose is bound by residues Glu-380 and Trp-388. Residues 389–401 are Cytoplasmic-facing; sequence FIVAELFSQGPRP. The chain crosses the membrane as a helical span at residues 402 to 422; the sequence is AAIAVAGFSNWTSNFIVGMCF. Topologically, residues 423–429 are extracellular; sequence QYVEQLC. The helical transmembrane segment at 430 to 450 threads the bilayer; that stretch reads GPYVFIIFTVLLVLFFIFTYF. Position 465 is a phosphoserine (Ser-465). The interval 468-492 is disordered; it reads RQGGASQSDKTPEELFHPLGADSQV. Thr-478 is modified (phosphothreonine). Ser-490 carries the phosphoserine modification.

The protein belongs to the major facilitator superfamily. Sugar transporter (TC 2.A.1.1) family. Glucose transporter subfamily. Found in a complex with ADD2, DMTN and SLC2A1. Interacts (via C-terminus cytoplasmic region) with DMTN. Interacts with SNX27; the interaction is required when endocytosed to prevent degradation in lysosomes and promote recycling to the plasma membrane. Interacts with GIPC (via PDZ domain). Interacts with STOM. Interacts with SGTA (via Gln-rich region). Interacts with BSG. Interacts with SMIM43; the interaction may promote SLC2A1-mediated glucose transport to meet the energy needs of mesendoderm differentiation. Post-translationally, phosphorylation at Ser-226 by PKC promotes glucose uptake by increasing cell membrane localization.

The protein localises to the cell membrane. Its subcellular location is the photoreceptor inner segment. The catalysed reaction is D-glucose(out) = D-glucose(in). Its activity is regulated as follows. The uptake of glucose is inhibited by cytochalasin B. Glucose uptake is increased in response to phorbol ester 12-O-tetradecanoylphorbol-13-acetate (TPA) treatment: TPA-induced glucose uptake requires phosphorylation at Ser-226. Functionally, facilitative glucose transporter, which is responsible for constitutive or basal glucose uptake. Has a very broad substrate specificity; can transport a wide range of aldoses including both pentoses and hexoses. Most important energy carrier of the brain: present at the blood-brain barrier and assures the energy-independent, facilitative transport of glucose into the brain. In association with BSG and NXNL1, promotes retinal cone survival by increasing glucose uptake into photoreceptors. Required for mesendoderm differentiation. This Sus scrofa (Pig) protein is Solute carrier family 2, facilitated glucose transporter member 1.